A 485-amino-acid polypeptide reads, in one-letter code: Glutamyl-tRNA(Gln) amidotransferase subunit A (485 aa).

Catalysis depends on charge relay system residues Lys79 and Ser154. The active-site Acyl-ester intermediate is Ser178.

It belongs to the amidase family. GatA subfamily. In terms of assembly, heterotrimer of A, B and C subunits.

The catalysed reaction is L-glutamyl-tRNA(Gln) + L-glutamine + ATP + H2O = L-glutaminyl-tRNA(Gln) + L-glutamate + ADP + phosphate + H(+). Allows the formation of correctly charged Gln-tRNA(Gln) through the transamidation of misacylated Glu-tRNA(Gln) in organisms which lack glutaminyl-tRNA synthetase. The reaction takes place in the presence of glutamine and ATP through an activated gamma-phospho-Glu-tRNA(Gln). The sequence is that of Glutamyl-tRNA(Gln) amidotransferase subunit A from Clostridium botulinum (strain Okra / Type B1).